The primary structure comprises 436 residues: ATP-dependent RNA helicase SUB2 (436 aa).

Over residues methionine 1 to asparagine 16 the composition is skewed to acidic residues. Residues methionine 1–glutamate 33 are disordered. Positions threonine 52–glutamine 80 match the Q motif motif. Positions isoleucine 83–histidine 258 constitute a Helicase ATP-binding domain. Residue alanine 96 to threonine 103 coordinates ATP. Positions aspartate 205–aspartate 208 match the DEAD box motif. Residues glycine 270–serine 431 form the Helicase C-terminal domain.

This sequence belongs to the DEAD box helicase family. DECD subfamily.

The protein resides in the nucleus. It catalyses the reaction ATP + H2O = ADP + phosphate + H(+). Its function is as follows. ATP-binding RNA helicase involved in transcription elongation and required for the export of mRNA out of the nucleus. SUB2 also plays a role in pre-mRNA splicing and spliceosome assembly. May be involved in rDNA and telomeric silencing, and maintenance of genome integrity. In Pyricularia oryzae (strain 70-15 / ATCC MYA-4617 / FGSC 8958) (Rice blast fungus), this protein is ATP-dependent RNA helicase SUB2 (SUB2).